Here is a 474-residue protein sequence, read N- to C-terminus: 3-isopropylmalate dehydratase large subunit (474 aa).

Residues Cys-353, Cys-414, and Cys-417 each coordinate [4Fe-4S] cluster.

This sequence belongs to the aconitase/IPM isomerase family. LeuC type 1 subfamily. In terms of assembly, heterodimer of LeuC and LeuD. [4Fe-4S] cluster serves as cofactor.

The enzyme catalyses (2R,3S)-3-isopropylmalate = (2S)-2-isopropylmalate. The protein operates within amino-acid biosynthesis; L-leucine biosynthesis; L-leucine from 3-methyl-2-oxobutanoate: step 2/4. Functionally, catalyzes the isomerization between 2-isopropylmalate and 3-isopropylmalate, via the formation of 2-isopropylmaleate. This Pseudomonas paraeruginosa (strain DSM 24068 / PA7) (Pseudomonas aeruginosa (strain PA7)) protein is 3-isopropylmalate dehydratase large subunit.